A 416-amino-acid polypeptide reads, in one-letter code: Transmembrane protease serine 11B-like protein (416 aa).

Over 1–15 the chain is Cytoplasmic; that stretch reads MYRPVIASRKSIPPW. The chain crosses the membrane as a helical; Signal-anchor for type II membrane protein span at residues 16–36; it reads LIILCVLGVLAALGIIIGLLV. Topologically, residues 37–416 are extracellular; that stretch reads HFLAVENKIY…RNWIASKTGI (380 aa). The region spanning 44–161 is the SEA domain; that stretch reads KIYYYQGGFK…GSLKLTEISK (118 aa). An N-linked (GlcNAc...) asparagine glycan is attached at Asn-107. Residues 185 to 415 form the Peptidase S1 domain; it reads ITGGSTAHKG…YRNWIASKTG (231 aa). The cysteines at positions 210 and 226 are disulfide-linked. His-225 acts as the Charge relay system in catalysis. Residue Asn-235 is glycosylated (N-linked (GlcNAc...) asparagine). The Charge relay system role is filled by Asp-270. Intrachain disulfides connect Cys-335–Cys-351 and Cys-362–Cys-391. Ser-366 serves as the catalytic Charge relay system.

The protein belongs to the peptidase S1 family. Expressed in esophagus, cervix, tongue, and testes.

It localises to the cell membrane. With respect to regulation, inhibited by aprotinin, leupeptin, benzamidine, SERPINA1, SPINT1 and SPINT2. In terms of biological role, serine protease. This is Transmembrane protease serine 11B-like protein (Tmprss11b) from Mus musculus (Mouse).